The sequence spans 484 residues: uncharacterized protein (484 aa).

Positions 47-226 constitute an FAD-binding PCMH-type domain; the sequence is TLPIPAAVVK…TEVTVKIFKF (180 aa).

The protein belongs to the FAD-binding oxidoreductase/transferase type 4 family.

This is an uncharacterized protein from Escherichia coli (strain K12).